A 700-amino-acid polypeptide reads, in one-letter code: Glycine--tRNA ligase beta subunit (700 aa).

The protein belongs to the class-II aminoacyl-tRNA synthetase family. In terms of assembly, tetramer of two alpha and two beta subunits.

The protein resides in the cytoplasm. The catalysed reaction is tRNA(Gly) + glycine + ATP = glycyl-tRNA(Gly) + AMP + diphosphate. This chain is Glycine--tRNA ligase beta subunit, found in Janthinobacterium sp. (strain Marseille) (Minibacterium massiliensis).